Reading from the N-terminus, the 433-residue chain is Phosphomethylpyrimidine synthase (433 aa).

Residues N69, M98, Y127, H163, 185–187, 226–229, and E265 each bind substrate; these read SRG and DACR. H269 contributes to the Zn(2+) binding site. Y292 provides a ligand contact to substrate. H333 is a Zn(2+) binding site. Residues C409, C412, and C416 each coordinate [4Fe-4S] cluster.

This sequence belongs to the ThiC family. Requires [4Fe-4S] cluster as cofactor.

It carries out the reaction 5-amino-1-(5-phospho-beta-D-ribosyl)imidazole + S-adenosyl-L-methionine = 4-amino-2-methyl-5-(phosphooxymethyl)pyrimidine + CO + 5'-deoxyadenosine + formate + L-methionine + 3 H(+). It functions in the pathway cofactor biosynthesis; thiamine diphosphate biosynthesis. Catalyzes the synthesis of the hydroxymethylpyrimidine phosphate (HMP-P) moiety of thiamine from aminoimidazole ribotide (AIR) in a radical S-adenosyl-L-methionine (SAM)-dependent reaction. This is Phosphomethylpyrimidine synthase from Clostridioides difficile (strain 630) (Peptoclostridium difficile).